The sequence spans 167 residues: N-alpha-acetyltransferase (167 aa).

An N-acetyltransferase domain is found at 12-167 (FTLRNARMDD…EDAYLMARPL (156 aa)). Tyr37 is a binding site for substrate. His88 provides a ligand contact to Zn(2+). Acetyl-CoA-binding positions include 92-94 (IAV) and 100-105 (RKGIAT). A Zn(2+)-binding site is contributed by Glu127. Residues Asn132 and 139-141 (YEK) contribute to the acetyl-CoA site. Tyr154 lines the substrate pocket.

It belongs to the acetyltransferase family. ARD1 subfamily. As to quaternary structure, homodimer.

The protein localises to the cytoplasm. It carries out the reaction N-terminal L-alanyl-[protein] + acetyl-CoA = N-terminal N(alpha)-acetyl-L-alanyl-[protein] + CoA + H(+). The enzyme catalyses N-terminal L-seryl-[protein] + acetyl-CoA = N-terminal N(alpha)-acetyl-L-seryl-[protein] + CoA + H(+). The catalysed reaction is N-terminal L-methionyl-L-leucyl-[protein] + acetyl-CoA = N-terminal N(alpha)-acetyl-L-methionyl-L-leucyl-[protein] + CoA + H(+). It catalyses the reaction N-terminal L-methionyl-L-glutamyl-[protein] + acetyl-CoA = N-terminal N(alpha)-acetyl-L-methionyl-L-glutamyl-[protein] + CoA + H(+). Its function is as follows. Displays alpha (N-terminal) acetyltransferase activity. Catalyzes the covalent attachment of an acetyl moiety from acetyl-CoA to the free alpha-amino group at the N-terminus of a protein. NAT is able to acetylate the alpha-amino group of methionine, alanine and serine N-terminal residue substrates, however it has a preference for Ser-N-terminal substrates. This is N-alpha-acetyltransferase from Saccharolobus solfataricus (strain ATCC 35092 / DSM 1617 / JCM 11322 / P2) (Sulfolobus solfataricus).